Reading from the N-terminus, the 488-residue chain is 3-octaprenyl-4-hydroxybenzoate carboxy-lyase (488 aa).

Asn-172 is a Mn(2+) binding site. Prenylated FMN-binding positions include 175–177 (IYR), 189–191 (RWL), and 194–195 (RG). Glu-238 is a Mn(2+) binding site. The active-site Proton donor is the Asp-287.

This sequence belongs to the UbiD family. In terms of assembly, homohexamer. Prenylated FMN serves as cofactor. Mn(2+) is required as a cofactor.

The protein resides in the cell membrane. The catalysed reaction is a 4-hydroxy-3-(all-trans-polyprenyl)benzoate + H(+) = a 2-(all-trans-polyprenyl)phenol + CO2. Its pathway is cofactor biosynthesis; ubiquinone biosynthesis. Functionally, catalyzes the decarboxylation of 3-octaprenyl-4-hydroxy benzoate to 2-octaprenylphenol, an intermediate step in ubiquinone biosynthesis. The protein is 3-octaprenyl-4-hydroxybenzoate carboxy-lyase of Shewanella oneidensis (strain ATCC 700550 / JCM 31522 / CIP 106686 / LMG 19005 / NCIMB 14063 / MR-1).